We begin with the raw amino-acid sequence, 578 residues long: Alpha-(1,6)-fucosyltransferase (578 aa).

Residues 1–9 (MRPWTGSWR) lie on the Cytoplasmic side of the membrane. Residues 10-30 (WIMLILFAWGTLLFYIGGHLV) form a helical; Signal-anchor for type II membrane protein membrane-spanning segment. Topologically, residues 31–578 (RDNENPDHSS…KYPTYQEAEK (548 aa)) are lumenal. 3 cysteine pairs are disulfide-bonded: cysteine 207–cysteine 269, cysteine 215–cysteine 233, and cysteine 221–cysteine 225. Positions 209 to 496 (KAKKLVCNIN…PDASAHFHSL (288 aa)) constitute a GT23 domain. The short motif at 302-308 (PRPPYLP) is the SH3-binding element. Residues 368–369 (RR) form an important for donor substrate binding region. Cysteines 468 and 475 form a disulfide. Residues 505-566 (QNAHNQLAIY…PSYKVKEKIE (62 aa)) form the SH3 domain.

Belongs to the glycosyltransferase 23 family.

The protein localises to the golgi apparatus. It localises to the golgi stack membrane. It catalyses the reaction N(4)-{beta-D-GlcNAc-(1-&gt;2)-alpha-D-Man-(1-&gt;3)-[beta-D-GlcNAc-(1-&gt;2)-alpha-D-Man-(1-&gt;6)]-beta-D-Man-(1-&gt;4)-beta-D-GlcNAc-(1-&gt;4)-beta-D-GlcNAc}-L-asparaginyl-[protein] + GDP-beta-L-fucose = an N(4)-{beta-D-GlcNAc-(1-&gt;2)-alpha-D-Man-(1-&gt;3)-[beta-D-GlcNAc-(1-&gt;2)-alpha-D-Man-(1-&gt;6)]-beta-D-Man-(1-&gt;4)-beta-D-GlcNAc-(1-&gt;4)-[alpha-L-Fuc-(1-&gt;6)]-beta-D-GlcNAc}-L-asparaginyl-[protein] + GDP + H(+). It participates in protein modification; protein glycosylation. Its function is as follows. Catalyzes the addition of fucose in alpha 1-6 linkage to the first GlcNAc residue, next to the peptide chains in N-glycans. The protein is Alpha-(1,6)-fucosyltransferase (fut8) of Xenopus tropicalis (Western clawed frog).